Reading from the N-terminus, the 125-residue chain is MAGRLSGVASRIMGGNGVVARSVGSSLRQRAGMGLPVGKHIVPDKPLSVNDELMWDNGTAFPEPCIDRIADTVGKYEALAWLSGGLGFFVGLGLLAVLNDKASKVPFTPRVYPYDNLRVELGGEP.

The N-terminal 29 residues, 1–29 (MAGRLSGVASRIMGGNGVVARSVGSSLRQ), are a transit peptide targeting the mitochondrion. Residues 78-98 (ALAWLSGGLGFFVGLGLLAVL) form a helical membrane-spanning segment.

It belongs to the complex I NDUFB8 subunit family. Complex I is composed of at least 49 different subunits.

The protein localises to the mitochondrion inner membrane. Functionally, accessory subunit of the mitochondrial membrane respiratory chain NADH dehydrogenase (Complex I), that is believed not to be involved in catalysis. Complex I functions in the transfer of electrons from NADH to the respiratory chain. The immediate electron acceptor for the enzyme is believed to be ubiquinone. The polypeptide is NADH dehydrogenase [ubiquinone] 1 beta subcomplex subunit 8, mitochondrial (Arabidopsis thaliana (Mouse-ear cress)).